Here is a 492-residue protein sequence, read N- to C-terminus: Aerolysin-4 (492 aa).

An N-terminal signal peptide occupies residues 1–23; sequence MKKLKITGLSLIISGLLMAQAQA. 2 disulfides stabilise this stretch: cysteine 42–cysteine 98 and cysteine 182–cysteine 187. The interaction with host N-linked glycan stretch occupies residues 68-84; it reads WQISGLANGWVIMGPGY. Residues 256 to 288 form a part of the transmembrane beta-barrel after proteolytic activation of the toxin and insertion into the host membrane region; that stretch reads YGLSEKVTTKNKFKWPLVGETELSIEIAANQSW. Residues 346-355 form an interaction with glycans from host GPI-anchor region; it reads RWGGNAWYTH. Positions 446–492 are excised as a propeptide; it reads AAASHSSRARNLSAGQGLRLEIPLDAQELSGLGFNNVSLSVTPAANQ.

This sequence belongs to the aerolysin family. As to quaternary structure, homodimer in solution; homoheptamer in the host membrane. After binding to GPI-anchored proteins in target membranes and proteolytic removal of the C-terminal propeptide, the protein assembles into a heptameric pre-pore complex. A further conformation change leads to insertion into the host membrane. Proteolytic cleavage and subsequent release of the propeptide trigger a major conformation change, leading to the formation of a heptameric pre-pore that then inserts into the host membrane.

Its subcellular location is the secreted. It is found in the host cell membrane. In terms of biological role, secreted, cytolytic toxin that forms pores in host membranes after proteolytic removal of a C-terminal propeptide, leading to destruction of the membrane permeability barrier and cell death. The pores are formed by transmembrane beta-strands and are approximately 3 nm in diameter. The sequence is that of Aerolysin-4 (ahh4) from Aeromonas hydrophila.